Reading from the N-terminus, the 310-residue chain is N-acyl-aromatic-L-amino acid amidohydrolase (carboxylate-forming) (310 aa).

Residues His20 and Glu23 each contribute to the Zn(2+) site. Substrate contacts are provided by residues Arg62 and 69–70 (NR). His113 is a binding site for Zn(2+). Residues Glu176 and Tyr286 each coordinate substrate.

The protein belongs to the AspA/AstE family. Aspartoacylase subfamily. Homotetramer. Zn(2+) serves as cofactor.

It is found in the apical cell membrane. The protein resides in the cytoplasm. It carries out the reaction an N-acyl-aromatic L-alpha-amino acid + H2O = an aromatic L-alpha-amino acid + a carboxylate. It catalyses the reaction an N-acetyl-L-cysteine-S-conjugate + H2O = an S-substituted L-cysteine + acetate. In terms of biological role, plays an important role in deacetylating mercapturic acids in kidney proximal tubules. The sequence is that of N-acyl-aromatic-L-amino acid amidohydrolase (carboxylate-forming) (acy3) from Xenopus tropicalis (Western clawed frog).